Reading from the N-terminus, the 119-residue chain is NADH-quinone oxidoreductase subunit A (119 aa).

The next 3 membrane-spanning stretches (helical) occupy residues Val9 to Val29, Leu63 to Val83, and Val88 to Ala108.

Belongs to the complex I subunit 3 family. As to quaternary structure, NDH-1 is composed of 14 different subunits. Subunits NuoA, H, J, K, L, M, N constitute the membrane sector of the complex.

The protein resides in the cell inner membrane. The enzyme catalyses a quinone + NADH + 5 H(+)(in) = a quinol + NAD(+) + 4 H(+)(out). NDH-1 shuttles electrons from NADH, via FMN and iron-sulfur (Fe-S) centers, to quinones in the respiratory chain. The immediate electron acceptor for the enzyme in this species is believed to be ubiquinone. Couples the redox reaction to proton translocation (for every two electrons transferred, four hydrogen ions are translocated across the cytoplasmic membrane), and thus conserves the redox energy in a proton gradient. The polypeptide is NADH-quinone oxidoreductase subunit A (Acidovorax sp. (strain JS42)).